Reading from the N-terminus, the 397-residue chain is Formate-dependent phosphoribosylglycinamide formyltransferase (397 aa).

Residues 21-22 and Glu81 each bind N(1)-(5-phospho-beta-D-ribosyl)glycinamide; that span reads EL. ATP-binding positions include Arg113, Lys154, 194-197, and Glu202; that span reads EEFV. The region spanning 118–312 is the ATP-grasp domain; the sequence is RFAAEKLKLP…EFQIHVRSAI (195 aa). Glu271 and Glu283 together coordinate Mg(2+). Residues Asp290, Lys361, and 368-369 contribute to the N(1)-(5-phospho-beta-D-ribosyl)glycinamide site; that span reads RR.

This sequence belongs to the PurK/PurT family. In terms of assembly, homodimer.

It catalyses the reaction N(1)-(5-phospho-beta-D-ribosyl)glycinamide + formate + ATP = N(2)-formyl-N(1)-(5-phospho-beta-D-ribosyl)glycinamide + ADP + phosphate + H(+). It participates in purine metabolism; IMP biosynthesis via de novo pathway; N(2)-formyl-N(1)-(5-phospho-D-ribosyl)glycinamide from N(1)-(5-phospho-D-ribosyl)glycinamide (formate route): step 1/1. Its function is as follows. Involved in the de novo purine biosynthesis. Catalyzes the transfer of formate to 5-phospho-ribosyl-glycinamide (GAR), producing 5-phospho-ribosyl-N-formylglycinamide (FGAR). Formate is provided by PurU via hydrolysis of 10-formyl-tetrahydrofolate. The polypeptide is Formate-dependent phosphoribosylglycinamide formyltransferase (Saccharolobus solfataricus (strain ATCC 35092 / DSM 1617 / JCM 11322 / P2) (Sulfolobus solfataricus)).